The primary structure comprises 82 residues: Putative defensin-like protein 191 (82 aa).

A signal peptide spans 1-28 (MAKSVNATGFITYMVIFLILTGISRVKA). Intrachain disulfides connect C33–C79, C46–C65, C51–C74, and C55–C76.

This sequence belongs to the DEFL family.

The protein localises to the secreted. This is Putative defensin-like protein 191 from Arabidopsis thaliana (Mouse-ear cress).